Consider the following 180-residue polypeptide: Glycodelin (180 aa).

The signal sequence occupies residues 1 to 18 (MLCLLLTLGVALVCGVPA). 2 N-linked (GlcNAc...) (complex) asparagine glycosylation sites follow: N46 and N81. 2 disulfide bridges follow: C84–C178 and C124–C137.

It belongs to the calycin superfamily. Lipocalin family. As to quaternary structure, homodimer. In terms of processing, four distinct glycoforms A, C, F and S arise from different N-linked oligosaccharide chains at amino acid residues Asn-46 and Asn-81. Glycodelin-A and -F are taken up by the cumulus cells in which partial deglycosylation takes place to produce glycodelin-C. As to expression, this protein is, the main protein synthesized and secreted in the endometrium from mid-luteal phase of the menstrual cycle and during the first semester of pregnancy. Glycodelin-A is expressed in amniotic fluid, endometrium/decidua and maternal serum (at protein level). Glycodelin-F is expressed in follicular fluid, luteinized granulosa cells and the oviduct (at protein level). Glycodelin-S is expressed in seminal plasma and seminal vesicles (at protein level). Glycodelin-C is detected in cumulus cells (at protein level), but cumulus cells do not synthesize Glycodelin-C but take up and convert glycodelin-A and -F vis glycan remodeling.

Its subcellular location is the secreted. Glycoprotein that regulates critical steps during fertilization and also has immunomonomodulatory effects. Four glycoforms, namely glycodelin-S, -A, -F and -C have been identified in reproductive tissues that differ in glycosylation and biological activity. Glycodelin-A has contraceptive and immunosuppressive activities. Glycodelin-C stimulates binding of spermatozoa to the zona pellucida. Glycodelin-F inhibits spermatozoa-zona pellucida binding and significantly suppresses progesterone-induced acrosome reaction of spermatozoa. Glycodelin-S in seminal plasma maintains the uncapacitated state of human spermatozoa. The chain is Glycodelin (PAEP) from Homo sapiens (Human).